Consider the following 304-residue polypeptide: Probable 5-dehydro-4-deoxyglucarate dehydratase (304 aa).

This sequence belongs to the DapA family.

It catalyses the reaction 5-dehydro-4-deoxy-D-glucarate + H(+) = 2,5-dioxopentanoate + CO2 + H2O. It participates in carbohydrate acid metabolism; D-glucarate degradation; 2,5-dioxopentanoate from D-glucarate: step 2/2. This chain is Probable 5-dehydro-4-deoxyglucarate dehydratase, found in Methylobacterium radiotolerans (strain ATCC 27329 / DSM 1819 / JCM 2831 / NBRC 15690 / NCIMB 10815 / 0-1).